The sequence spans 398 residues: uncharacterized protein (398 aa).

A disordered region spans residues 313–398; sequence KTIKSSGSKT…TSKSIKYYEV (86 aa). Low complexity-rich tracts occupy residues 314 to 333 and 343 to 398; these read TIKS…TNKS and GSKT…YYEV.

This is an uncharacterized protein from Acanthamoeba polyphaga mimivirus (APMV).